The primary structure comprises 362 residues: Phosphate acyltransferase (362 aa).

Positions 343–362 (TKKISTSTINPKTSETTKES) are disordered. Residues 344–356 (KKISTSTINPKTS) are compositionally biased toward polar residues.

The protein belongs to the PlsX family. In terms of assembly, homodimer. Probably interacts with PlsY.

Its subcellular location is the cytoplasm. It catalyses the reaction a fatty acyl-[ACP] + phosphate = an acyl phosphate + holo-[ACP]. Its pathway is lipid metabolism; phospholipid metabolism. Its function is as follows. Catalyzes the reversible formation of acyl-phosphate (acyl-PO(4)) from acyl-[acyl-carrier-protein] (acyl-ACP). This enzyme utilizes acyl-ACP as fatty acyl donor, but not acyl-CoA. The sequence is that of Phosphate acyltransferase from Aster yellows witches'-broom phytoplasma (strain AYWB).